A 34-amino-acid chain; its full sequence is uncharacterized protein (34 aa).

The helical transmembrane segment at 10 to 30 (LIITSSFFAIAVVLVLSVLLI) threads the bilayer.

Its subcellular location is the membrane. This is an uncharacterized protein from Escherichia coli O157:H7.